A 227-amino-acid chain; its full sequence is Guanylate kinase (227 aa).

Positions 21–199 constitute a Guanylate kinase-like domain; that stretch reads GNLFMVVAPS…ALAELECIVA (179 aa). Position 28-35 (28-35) interacts with ATP; sequence APSGAGKS.

The protein belongs to the guanylate kinase family.

It is found in the cytoplasm. It catalyses the reaction GMP + ATP = GDP + ADP. Functionally, essential for recycling GMP and indirectly, cGMP. This chain is Guanylate kinase, found in Burkholderia mallei (strain ATCC 23344).